The primary structure comprises 400 residues: NADPH dehydrogenase 1 (400 aa).

FMN-binding residues include Thr38 and Gln115. 2 residues coordinate substrate: His192 and Asn195. The active-site Proton donor is the Tyr197. Residues Arg244 and Arg349 each coordinate FMN. Tyr376 contributes to the substrate binding site.

Homodimer or heterodimer. FMN is required as a cofactor.

The catalysed reaction is A + NADPH + H(+) = AH2 + NADP(+). Its function is as follows. Flavin-dependent enoate reductase that catalyzes the chemo- and stereoslective hydrogenation of electron-poor alkenes. The enzyme is reduced by NADPH, and oxygen, quinones, and alpha,beta-unsaturated aldehydes and ketones can act as electron acceptors to complete catalytic turnover. The physiological oxidant remains elusive. The sequence is that of NADPH dehydrogenase 1 from Saccharomyces pastorianus (Lager yeast).